A 469-amino-acid chain; its full sequence is Dihydrolipoyl dehydrogenase (469 aa).

FAD contacts are provided by residues 34–42 (EKQYWGGVC), K51, and G114. C42 and C47 are oxidised to a cystine. Residues 179–183 (GAGAI), E202, and 269–272 (SVGF) each bind NAD(+). The FAD site is built by D312 and A320. Residue H448 is the Proton acceptor of the active site.

This sequence belongs to the class-I pyridine nucleotide-disulfide oxidoreductase family. In terms of assembly, homodimer. Part of an unusual ODH/PDH supercomplex, consisting of AceE (E1), AceF (E2), and Lpd (E3) together with OdhA (E1+E2). The cofactor is FAD.

It is found in the cytoplasm. It carries out the reaction N(6)-[(R)-dihydrolipoyl]-L-lysyl-[protein] + NAD(+) = N(6)-[(R)-lipoyl]-L-lysyl-[protein] + NADH + H(+). It participates in carbohydrate metabolism; tricarboxylic acid cycle; succinyl-CoA from 2-oxoglutarate (dehydrogenase route): step 1/1. In terms of biological role, lipoamide dehydrogenase is an essential component of the pyruvate dehydrogenase (PDH) and 2-oxoglutarate dehydrogenase (ODH) complexes. Catalyzes the reoxidation of dihydrolipoyl groups which are covalently attached to the lipoate acyltransferase components (E2) of the complexes. Also catalyzes a reversible NADH:NAD(+) transhydrogenation, and is able to transfer electrons from NADH to various redox-active compounds and quinones. May be involved in quinone redox cycling in C.glutamicum. In Corynebacterium glutamicum (strain ATCC 13032 / DSM 20300 / JCM 1318 / BCRC 11384 / CCUG 27702 / LMG 3730 / NBRC 12168 / NCIMB 10025 / NRRL B-2784 / 534), this protein is Dihydrolipoyl dehydrogenase (lpd).